Here is a 333-residue protein sequence, read N- to C-terminus: Quinolinate synthase (333 aa).

The iminosuccinate site is built by His41 and Ser58. Cys103 contributes to the [4Fe-4S] cluster binding site. Iminosuccinate-binding positions include 129-131 (YIN) and Ser146. Cys189 provides a ligand contact to [4Fe-4S] cluster. Iminosuccinate contacts are provided by residues 215–217 (HPE) and Thr232. Cys282 is a binding site for [4Fe-4S] cluster.

Belongs to the quinolinate synthase family. Type 2 subfamily. Requires [4Fe-4S] cluster as cofactor.

The protein resides in the cytoplasm. The enzyme catalyses iminosuccinate + dihydroxyacetone phosphate = quinolinate + phosphate + 2 H2O + H(+). Its pathway is cofactor biosynthesis; NAD(+) biosynthesis; quinolinate from iminoaspartate: step 1/1. Functionally, catalyzes the condensation of iminoaspartate with dihydroxyacetone phosphate to form quinolinate. This is Quinolinate synthase from Prochlorococcus marinus (strain MIT 9313).